The following is a 219-amino-acid chain: PKHD-type hydroxylase Mmar10_1675 (219 aa).

In terms of domain architecture, Fe2OG dioxygenase spans 77–171 (TLSRILVSRY…RVAVVGWVRS (95 aa)). Residues histidine 95, aspartate 97, and histidine 152 each contribute to the Fe cation site. Arginine 162 contributes to the 2-oxoglutarate binding site.

It depends on Fe(2+) as a cofactor. L-ascorbate is required as a cofactor.

The sequence is that of PKHD-type hydroxylase Mmar10_1675 from Maricaulis maris (strain MCS10) (Caulobacter maris).